A 212-amino-acid chain; its full sequence is Leucyl/phenylalanyl-tRNA--protein transferase (212 aa).

It belongs to the L/F-transferase family.

It localises to the cytoplasm. The enzyme catalyses N-terminal L-lysyl-[protein] + L-leucyl-tRNA(Leu) = N-terminal L-leucyl-L-lysyl-[protein] + tRNA(Leu) + H(+). The catalysed reaction is N-terminal L-arginyl-[protein] + L-leucyl-tRNA(Leu) = N-terminal L-leucyl-L-arginyl-[protein] + tRNA(Leu) + H(+). It carries out the reaction L-phenylalanyl-tRNA(Phe) + an N-terminal L-alpha-aminoacyl-[protein] = an N-terminal L-phenylalanyl-L-alpha-aminoacyl-[protein] + tRNA(Phe). In terms of biological role, functions in the N-end rule pathway of protein degradation where it conjugates Leu, Phe and, less efficiently, Met from aminoacyl-tRNAs to the N-termini of proteins containing an N-terminal arginine or lysine. This chain is Leucyl/phenylalanyl-tRNA--protein transferase, found in Christiangramia forsetii (strain DSM 17595 / CGMCC 1.15422 / KT0803) (Gramella forsetii).